A 367-amino-acid polypeptide reads, in one-letter code: MQSSLARPPVLAGCGERRGLAAVARCRAEAAAPVWTASRASAGPYTGRDPEVKKPAWLRQRAAQGEKYARLRESIGELKLNTVCVEAQCPNIGECWNGGGGAGGEGDGIATATIMVLGDTCTRGCRFCAVKTSNKPPPPDPLEPLNTALAVASWGVDYVVLTSVDRDDLPDGGSSHFAQTVKALKELKPGILVECLTSDFRGDLEAISSLANSGLDVYAHNIETVRSLQRVVRDPRAGYDQSLAVLKHAKGSREDMITKSSIMLGLGETDEEVKQAMMDLRAIGVDILTLGQYLQPSERHLTVREYVTPQKFQFWKEYGESVGFRYVASGPLVRSSYRAGELFIQNLVRNNKTESSMDPYAEITKSN.

[4Fe-4S] cluster is bound by residues C84, C89, C95, C121, C125, C128, and S336. The region spanning 104–325 (GEGDGIATAT…KEYGESVGFR (222 aa)) is the Radical SAM core domain.

Belongs to the radical SAM superfamily. Lipoyl synthase family. [4Fe-4S] cluster is required as a cofactor.

The protein localises to the plastid. It is found in the chloroplast. It catalyses the reaction [[Fe-S] cluster scaffold protein carrying a second [4Fe-4S](2+) cluster] + N(6)-octanoyl-L-lysyl-[protein] + 2 oxidized [2Fe-2S]-[ferredoxin] + 2 S-adenosyl-L-methionine + 4 H(+) = [[Fe-S] cluster scaffold protein] + N(6)-[(R)-dihydrolipoyl]-L-lysyl-[protein] + 4 Fe(3+) + 2 hydrogen sulfide + 2 5'-deoxyadenosine + 2 L-methionine + 2 reduced [2Fe-2S]-[ferredoxin]. It functions in the pathway protein modification; protein lipoylation via endogenous pathway; protein N(6)-(lipoyl)lysine from octanoyl-[acyl-carrier-protein]: step 2/2. Functionally, catalyzes the radical-mediated insertion of two sulfur atoms into the C-6 and C-8 positions of the octanoyl moiety bound to the lipoyl domains of lipoate-dependent enzymes, thereby converting the octanoylated domains into lipoylated derivatives. The sequence is that of Lipoyl synthase 2, chloroplastic from Zea mays (Maize).